The chain runs to 94 residues: Co-chaperonin GroES (94 aa).

It belongs to the GroES chaperonin family. In terms of assembly, heptamer of 7 subunits arranged in a ring. Interacts with the chaperonin GroEL.

It localises to the cytoplasm. Together with the chaperonin GroEL, plays an essential role in assisting protein folding. The GroEL-GroES system forms a nano-cage that allows encapsulation of the non-native substrate proteins and provides a physical environment optimized to promote and accelerate protein folding. GroES binds to the apical surface of the GroEL ring, thereby capping the opening of the GroEL channel. This chain is Co-chaperonin GroES, found in Staphylococcus epidermidis.